We begin with the raw amino-acid sequence, 655 residues long: NACHT, LRR and PYD domains-containing protein 10 (655 aa).

The region spanning 1–96 (MAMAKARKPR…VDQLSHICLH (96 aa)) is the Pyrin domain. Residues 167-484 (SLVVLQGSAG…AMSYLVKEDQ (318 aa)) enclose the NACHT domain. Position 173–180 (173–180 (GSAGTGKT)) interacts with ATP. A compositionally biased stretch (polar residues) spans 597-609 (QSQNLFSVKSSLS). Positions 597 to 655 (QSQNLFSVKSSLSHGPKEEQKCPSVHGQKEGKDNIAGTQKEASTGKGRGTEETPKNTYI) are disordered. Composition is skewed to basic and acidic residues over residues 611–629 (GPKEEQKCPSVHGQKEGKD) and 644–655 (RGTEETPKNTYI).

Belongs to the NLRP family. In terms of assembly, oligomerizes. Interacts with PYCARD. Also interacts with CASP1 and IL1B. Interacts with NOD1 and components of the NOD1 signaling pathway including RIPK2, NR2C2/TAK1 and IKBKG/NEMO. In terms of tissue distribution, highly expressed in basal and suprabasal epidermal cell layers with lower levels in dermal fibroblast cells (at protein level). Widely expressed with highest levels in heart, brain and skeletal muscle. Also expressed in liver, colon, dermis and epidermis. Little expression detected in myeloid cells or peripheral blood mononuclear cells.

Its subcellular location is the cytoplasm. It localises to the cell membrane. Functionally, inhibits autoprocessing of CASP1, CASP1-dependent IL1B secretion, PYCARD aggregation and PYCARD-mediated apoptosis but not apoptosis induced by FAS or BID. Displays anti-inflammatory activity. Required for immunity against C.albicans infection. Involved in the innate immune response by contributing to pro-inflammatory cytokine release in response to invasive bacterial infection. Contributes to T-cell-mediated inflammatory responses in the skin. Plays a role in protection against periodontitis through its involvement in induction of IL1A via ERK activation in oral epithelial cells infected with periodontal pathogens. Exhibits both ATPase and GTPase activities. The polypeptide is NACHT, LRR and PYD domains-containing protein 10 (NLRP10) (Homo sapiens (Human)).